Here is an 82-residue protein sequence, read N- to C-terminus: uncharacterized protein (82 aa).

Positions 11–82 (NVGIYVRVST…HIEQGIMTHC (72 aa)) constitute a Resolvase/invertase-type recombinase catalytic domain. The active-site O-(5'-phospho-DNA)-serine intermediate is Ser19.

This sequence belongs to the site-specific recombinase resolvase family.

This is an uncharacterized protein from Bacillus phage phi105 (Bacteriophage phi-105).